A 123-amino-acid polypeptide reads, in one-letter code: DPEP2 neighbor protein (123 aa).

A disordered region spans residues 67–123 (APLATPTKAEAEKPAPRRAPKRRQATIESDKDLGCSSPKIRRLEHRGRRLTPQKLAG). Residues 105-117 (KIRRLEHRGRRLT) are compositionally biased toward basic residues.

The sequence is that of DPEP2 neighbor protein from Homo sapiens (Human).